The primary structure comprises 94 residues: Selenoprotein K (94 aa).

Residues 20–42 (LSFITDFFWGIAEFVVLFFRTLL) form a helical membrane-spanning segment. Residues 48 to 94 (KRRGYGGSSDSRYDDGRGPPGNPPRRMGRINHLRGPNPPPMAGGUGR) form a disordered region. Sec-92 is a non-standard amino acid (selenocysteine).

This sequence belongs to the selenoprotein K family. Interacts with DERL1, DERL2, DERL3 and SELENOS. The SELENOK-SELENOS complex interacts with VCP. Interacts with ZDHHC6. Cleaved by CAPN2/m-calpain in resting macrophages but not in activated macrophages. Macrophage activation up-regulates expression of the calpain inhibitor CAST/calpastatin, resulting in inhibition of CAPN2 activity. In terms of processing, truncated SELENOK proteins produced by failed UGA/Sec decoding are ubiquitinated by the CRL2(KLHDC2) complex, which recognizes the diglycine (Gly-Gly) at the C-terminus of truncated SELENOK proteins.

It is found in the endoplasmic reticulum membrane. Its subcellular location is the cell membrane. Its function is as follows. Required for Ca(2+) flux in immune cells and plays a role in T-cell proliferation and in T-cell and neutrophil migration. Involved in endoplasmic reticulum-associated degradation (ERAD) of soluble glycosylated proteins. Required for palmitoylation and cell surface expression of CD36 and involved in macrophage uptake of low-density lipoprotein and in foam cell formation. Together with ZDHHC6, required for palmitoylation of ITPR1 in immune cells, leading to regulate ITPR1 stability and function. Plays a role in protection of cells from ER stress-induced apoptosis. Protects cells from oxidative stress when overexpressed in cardiomyocytes. The sequence is that of Selenoprotein K from Sus scrofa (Pig).